The chain runs to 102 residues: Small ribosomal subunit protein uS10 (102 aa).

Belongs to the universal ribosomal protein uS10 family. Part of the 30S ribosomal subunit.

Functionally, involved in the binding of tRNA to the ribosomes. In Malacoplasma penetrans (strain HF-2) (Mycoplasma penetrans), this protein is Small ribosomal subunit protein uS10.